Here is a 381-residue protein sequence, read N- to C-terminus: 40-kDa huntingtin-associated protein (381 aa).

A2 bears the N-acetylalanine mark. A Nuclear localization signal motif is present at residues 34-36; sequence KKR. Residues 213–260 are disordered; it reads EHGGHPVQQPELPQQLPSVPQPSLPGPQPRPVLGSTLPLPLPPDHAPG. Low complexity predominate over residues 218–230; it reads PVQQPELPQQLPS. The span at 231–242 shows a compositional bias: pro residues; it reads VPQPSLPGPQPR.

In terms of assembly, interacts with HTT (via C-terminus). Interacts with RAB5A. Found in a complex with F8A1/F8A2/F8A3, HTT and RAB5A; mediates the recruitment of HTT by RAB5A onto early endosomes.

It localises to the cytoplasm. It is found in the nucleus. The protein resides in the early endosome. Its subcellular location is the nuclear body. Its function is as follows. RAB5A effector molecule that is involved in vesicular trafficking of early endosomes. Mediates the recruitment of HTT by RAB5A onto early endosomes. The HTT-F8A1/F8A2/F8A3-RAB5A complex stimulates early endosomal interaction with actin filaments and inhibits interaction with microtubules, leading to the reduction of endosome motility. This is 40-kDa huntingtin-associated protein (F8a1) from Rattus norvegicus (Rat).